The primary structure comprises 642 residues: tRNA uridine 5-carboxymethylaminomethyl modification enzyme MnmG (642 aa).

FAD-binding positions include 10–15 (GAGHAG), valine 122, and serine 177. Residue 269-283 (SARYCPSLEDKVMRF) participates in NAD(+) binding. An FAD-binding site is contributed by glutamine 366.

The protein belongs to the MnmG family. Homodimer. Heterotetramer of two MnmE and two MnmG subunits. It depends on FAD as a cofactor.

The protein resides in the cytoplasm. In terms of biological role, NAD-binding protein involved in the addition of a carboxymethylaminomethyl (cmnm) group at the wobble position (U34) of certain tRNAs, forming tRNA-cmnm(5)s(2)U34. This is tRNA uridine 5-carboxymethylaminomethyl modification enzyme MnmG from Syntrophobacter fumaroxidans (strain DSM 10017 / MPOB).